A 56-amino-acid polypeptide reads, in one-letter code: Putative 2-Cys peroxiredoxin BAS1 (56 aa).

Belongs to the peroxiredoxin family. AhpC/Prx1 subfamily. As to quaternary structure, homodimer; disulfide-linked, upon oxidation.

Its subcellular location is the plastid. The protein resides in the chloroplast. It catalyses the reaction a hydroperoxide + [thioredoxin]-dithiol = an alcohol + [thioredoxin]-disulfide + H2O. Functionally, thiol-specific peroxidase that catalyzes the reduction of hydrogen peroxide and organic hydroperoxides to water and alcohols, respectively. Plays a role in cell protection against oxidative stress by detoxifying peroxides. May be an antioxidant enzyme particularly in the developing shoot and photosynthesizing leaf. The protein is Putative 2-Cys peroxiredoxin BAS1 of Pinus strobus (Eastern white pine).